The primary structure comprises 145 residues: Large ribosomal subunit protein uL14m (145 aa).

A mitochondrion-targeting transit peptide spans 1 to 30; sequence MAFSSGLWGPCVHMSRAFSQRCFSTTGSLG.

Belongs to the universal ribosomal protein uL14 family. Component of the mitochondrial ribosome large subunit (39S) which comprises a 16S rRNA and about 50 distinct proteins. Interacts with MALSU1.

It localises to the mitochondrion. Its function is as follows. May form part of 2 intersubunit bridges in the assembled ribosome. Upon binding to MALSU1, intersubunit bridge formation is blocked, preventing ribosome formation and repressing translation. In Bos taurus (Bovine), this protein is Large ribosomal subunit protein uL14m (MRPL14).